The sequence spans 783 residues: MNRKKHQILKILLLCLISSKSSASEKELNLQFIRHKFGQNTEDIELFFNSSTVLPGNYTVDVKLNDEVIGRAKLEVSQDDKESYCLKDEWLSDLGIIINRDFYNKYFNIKRECYEIGKEKNSITTFDNNSQIFSLYMPQAAYIKKGNTEHKWSYGDPGFNLNYDAYLSKNDEDSSIYGNLEGNVNIDKWVLYGRGYKYEHDKFTTDDVTLSRAIKSLEGDLIIGDTYTNTSLMDNISFYGVQLRSNNAMTPERRGDYSPIISGIAKSNARVTVKQNGVVLHSELVSPGPFHINNVRGIRSGELVMTVTEEDGSEQQTRIPVTFIANLLSPGNYNYDFGIGNKEATWEPDNIFAYGSFDYGLNLLTLNASLLFEQHYSNAGIGAVGSIGSLGAVSVSGNISRAKNQLETDQGYSTSANYSKNVGANGNLQIIGYKFSSEGYTQYANFDYRAPRKDKKEKERYEVTLTQQFPASNVFLSVTGWKKFYWNDNSVTGANVSYTQNFGTVNASVNGSYSRGDGAKSDYMLGFNINIPFRHNDRQFYSNSGVTYNRNSGIGFNAGFSEDVTKNFNYNVNAAASKDNESVSLSTNYTSSMFRTSASVSKNRNSTNASAQIGGAIIGVKDGGVMLTSMSSNSVAIVQMEGLAGYAFTNGVESDWRGRIAYPMTTYMDNDIQISTDKLPSNIELTDNVETIVPTNRAIKLQKIKYKNMSRHVLKVYDKNGFVIPMGTAVKNSNGEIISFVNNNGISLLNIDKNDERVFFGSCTISTSGLKDNLSEIQEVNCE.

The signal sequence occupies residues 1-23; the sequence is MNRKKHQILKILLLCLISSKSSA. The cysteines at positions 763 and 782 are disulfide-linked.

It belongs to the fimbrial export usher family.

Its subcellular location is the cell outer membrane. In terms of biological role, involved in the export and assembly of K99 fimbrial subunits across the outer membrane. This Escherichia coli protein is Outer membrane usher protein FanD (fanD).